Reading from the N-terminus, the 61-residue chain is MDPNCSCTTGVSCACTGSCTCKECKCTSCKKSCCSCCPVGCAKCAHGCVCKGTLENCSCCA.

Residues 1–29 are beta; it reads MDPNCSCTTGVSCACTGSCTCKECKCTSC. 20 residues coordinate a divalent metal cation: Cys-5, Cys-7, Cys-13, Cys-15, Cys-19, Cys-21, Cys-24, Cys-26, Cys-29, Cys-33, Cys-34, Cys-36, Cys-37, Cys-41, Cys-44, Cys-48, Cys-50, Cys-57, Cys-59, and Cys-60. Residues 30-61 form an alpha region; that stretch reads KKSCCSCCPVGCAKCAHGCVCKGTLENCSCCA.

Belongs to the metallothionein superfamily. Type 1 family. As to quaternary structure, monomer.

Metallothioneins have a high content of cysteine residues that bind various heavy metals; these proteins are transcriptionally regulated by both heavy metals and glucocorticoids. The sequence is that of Metallothionein-1M (MT1M) from Homo sapiens (Human).